The sequence spans 200 residues: Glycerol-3-phosphate acyltransferase (200 aa).

Helical transmembrane passes span 2 to 22, 51 to 71, 84 to 104, 114 to 134, and 159 to 179; these read FNIP…AVIV, KAAA…VLLA, AIAA…FFGF, LGVL…IWLV, and FFMP…LVLF.

It belongs to the PlsY family. As to quaternary structure, probably interacts with PlsX.

The protein localises to the cell inner membrane. It carries out the reaction an acyl phosphate + sn-glycerol 3-phosphate = a 1-acyl-sn-glycero-3-phosphate + phosphate. It functions in the pathway lipid metabolism; phospholipid metabolism. Functionally, catalyzes the transfer of an acyl group from acyl-phosphate (acyl-PO(4)) to glycerol-3-phosphate (G3P) to form lysophosphatidic acid (LPA). This enzyme utilizes acyl-phosphate as fatty acyl donor, but not acyl-CoA or acyl-ACP. In Neisseria meningitidis serogroup B (strain ATCC BAA-335 / MC58), this protein is Glycerol-3-phosphate acyltransferase.